A 403-amino-acid chain; its full sequence is Serine/threonine transporter SstT (403 aa).

10 helical membrane-spanning segments follow: residues 15-35 (LGLIPQIVIGIALGVGVAIVW), 49-69 (FISALKAVAPILVFLLVMTAI), 85-105 (LLYVVGTLCAALVAVLASFIF), 142-162 (ALLNANFVGILAWAMGLGMML), 183-203 (IVQLVIRCAPLGIFGLVAGTL), 218-238 (LAVIVGCMLFVALVTNPLIVF), 246-268 (YPLVFACLRGSAITAFFTRSSAA), 289-309 (ISIPLGATINMAGAAVTISVI), 317-337 (LGIGVDFATALLLCVVASLAA), and 362-382 (PDVAMQVVAIGFVISVVQDAT).

This sequence belongs to the dicarboxylate/amino acid:cation symporter (DAACS) (TC 2.A.23) family.

The protein localises to the cell inner membrane. The catalysed reaction is L-serine(in) + Na(+)(in) = L-serine(out) + Na(+)(out). The enzyme catalyses L-threonine(in) + Na(+)(in) = L-threonine(out) + Na(+)(out). Its function is as follows. Involved in the import of serine and threonine into the cell, with the concomitant import of sodium (symport system). The protein is Serine/threonine transporter SstT of Chromohalobacter salexigens (strain ATCC BAA-138 / DSM 3043 / CIP 106854 / NCIMB 13768 / 1H11).